The following is a 465-amino-acid chain: Cruciform DNA-recognizing protein 1 (465 aa).

Disordered stretches follow at residues 107-227 and 247-276; these read EAGG…VPNP and RLNKKEEVPEPVAGPIVESSVTEKSPALPQ. Residues 127–151 show a composition bias toward basic residues; the sequence is NRKKNKRNNKKRRSKLKKKSTKNNK. S153 and S156 each carry phosphoserine. The segment covering 156–165 has biased composition (acidic residues); sequence SLDDNEEEDG. Positions 160–161 are X-DNA-binding; it reads NE. A compositionally biased stretch (low complexity) spans 166 to 177; the sequence is VTGTTTEDVTGT. T182 is subject to Phosphothreonine. Residue S271 is modified to Phosphoserine. Position 295 is a phosphothreonine (T295). Residues 300–465 form a disordered region; that stretch reads AVTPLINEPE…FFGKLKKLFK (166 aa). Phosphoserine occurs at positions 319 and 343. Residues 337-363 are compositionally biased toward basic and acidic residues; sequence LVEKRESTEGVLDGSKKVENKAKKDEE. T366 bears the Phosphothreonine mark. 2 stretches are compositionally biased toward basic and acidic residues: residues 385–398 and 404–428; these read AEGRKSPAVSEEKE and EKGSKEVKRSETSKEKKPSAKEVKK. At S394 the chain carries Phosphoserine. The residue at position 440 (S440) is a Phosphoserine. A compositionally biased stretch (basic residues) spans 451-465; it reads KKKTGFFGKLKKLFK.

It belongs to the CRP1/MDG1 family. Cleaved in the vicinity of position 160 to give an X-DNA-binding N-terminal subpeptide and a non-DNA-binding C-terminal subpeptide.

Cruciform DNA-binding protein which exerts an enhancing effect on the cleavage of cruciform DNA (X-DNA) by endonuclease VII from bacteriophage T4. This chain is Cruciform DNA-recognizing protein 1 (CRP1), found in Saccharomyces cerevisiae (strain ATCC 204508 / S288c) (Baker's yeast).